Reading from the N-terminus, the 256-residue chain is Small ribosomal subunit protein eS1 (256 aa).

Residues 1–18 (MAVGKNKRLSKGKKGLKK) are compositionally biased toward basic residues. The segment at 1–20 (MAVGKNKRLSKGKKGLKKKA) is disordered. An N-acetylalanine; partial modification is found at Ala2.

This sequence belongs to the eukaryotic ribosomal protein eS1 family. In terms of assembly, component of the small ribosomal subunit. Mature ribosomes consist of a small (40S) and a large (60S) subunit. The 40S subunit contains about 33 different proteins and 1 molecule of RNA (18S). The 60S subunit contains about 49 different proteins and 3 molecules of RNA (25S, 5.8S and 5S).

The protein localises to the cytoplasm. In Podospora anserina (strain S / ATCC MYA-4624 / DSM 980 / FGSC 10383) (Pleurage anserina), this protein is Small ribosomal subunit protein eS1.